The chain runs to 387 residues: MKQAVIVDCIRTPMGRSKAGVFRNVRAETLSAELMKALMVRNPQLDPNDIEDVIWGCVQQTLEQGFNIARNASLLAGIPKTAGAVTVNRLCGSSMDALHQAARAIMTGQGDTFIIGGVEHMGHVPMNHGVDFHPGLANRVAKASGMMGLTAEMLGKMHGITREQQDAFAVRSHQRAHAATIEGRFAKEIWGIEGHDANGALIKVMTDEVIRPETTLESLAGLRPAFDPVNGTVTAGTSSALSDGASAMLVMEESKARALGLTIRARIRSMAVAGCDAAIMGYGPVPATKKALARAGLSVADLDLIELNEAFAAQSLPCVKDLGLQDVVDEKINLNGGAIALGHPLGCSGARISTTLINLMEEKDATLGLATMCIGLGQGIATVFERV.

The active-site Acyl-thioester intermediate is the Cys91. Catalysis depends on proton acceptor residues His343 and Cys373.

The protein belongs to the thiolase-like superfamily. Thiolase family. As to quaternary structure, heterotetramer of two alpha chains (FadB) and two beta chains (FadA).

It localises to the cytoplasm. It catalyses the reaction an acyl-CoA + acetyl-CoA = a 3-oxoacyl-CoA + CoA. Its pathway is lipid metabolism; fatty acid beta-oxidation. Its function is as follows. Catalyzes the final step of fatty acid oxidation in which acetyl-CoA is released and the CoA ester of a fatty acid two carbons shorter is formed. In Shewanella frigidimarina (strain NCIMB 400), this protein is 3-ketoacyl-CoA thiolase.